A 442-amino-acid chain; its full sequence is 3-isopropylmalate dehydratase large subunit (442 aa).

Residues Cys347, Cys407, and Cys410 each contribute to the [4Fe-4S] cluster site.

This sequence belongs to the aconitase/IPM isomerase family. LeuC type 1 subfamily. Heterodimer of LeuC and LeuD. [4Fe-4S] cluster is required as a cofactor.

The enzyme catalyses (2R,3S)-3-isopropylmalate = (2S)-2-isopropylmalate. It functions in the pathway amino-acid biosynthesis; L-leucine biosynthesis; L-leucine from 3-methyl-2-oxobutanoate: step 2/4. Catalyzes the isomerization between 2-isopropylmalate and 3-isopropylmalate, via the formation of 2-isopropylmaleate. The polypeptide is 3-isopropylmalate dehydratase large subunit (Buchnera aphidicola subsp. Uroleucon solidaginis).